A 605-amino-acid polypeptide reads, in one-letter code: Elongation factor 4 (605 aa).

In terms of domain architecture, tr-type G spans 11–193 (EKIRNFSIIA…QIVEKVPAPT (183 aa)). GTP is bound by residues 23-28 (DHGKST) and 140-143 (NKID).

The protein belongs to the TRAFAC class translation factor GTPase superfamily. Classic translation factor GTPase family. LepA subfamily.

The protein resides in the cell membrane. The enzyme catalyses GTP + H2O = GDP + phosphate + H(+). Its function is as follows. Required for accurate and efficient protein synthesis under certain stress conditions. May act as a fidelity factor of the translation reaction, by catalyzing a one-codon backward translocation of tRNAs on improperly translocated ribosomes. Back-translocation proceeds from a post-translocation (POST) complex to a pre-translocation (PRE) complex, thus giving elongation factor G a second chance to translocate the tRNAs correctly. Binds to ribosomes in a GTP-dependent manner. This chain is Elongation factor 4, found in Streptococcus pyogenes serotype M4 (strain MGAS10750).